A 202-amino-acid polypeptide reads, in one-letter code: Large ribosomal subunit protein uL5 (202 aa).

Residues 1–17 (MSAKAATKNATKVAVKA) show a composition bias toward low complexity. Residues 1 to 30 (MSAKAATKNATKVAVKAPEATTPVETKKSK) are disordered.

Belongs to the universal ribosomal protein uL5 family. As to quaternary structure, component of the large ribosomal subunit.

Its subcellular location is the nucleus. It localises to the cytoplasm. Functionally, component of the ribosome, a large ribonucleoprotein complex responsible for the synthesis of proteins in the cell. The small ribosomal subunit (SSU) binds messenger RNAs (mRNAs) and translates the encoded message by selecting cognate aminoacyl-transfer RNA (tRNA) molecules. The large subunit (LSU) contains the ribosomal catalytic site termed the peptidyl transferase center (PTC), which catalyzes the formation of peptide bonds, thereby polymerizing the amino acids delivered by tRNAs into a polypeptide chain. The nascent polypeptides leave the ribosome through a tunnel in the LSU and interact with protein factors that function in enzymatic processing, targeting, and the membrane insertion of nascent chains at the exit of the ribosomal tunnel. This chain is Large ribosomal subunit protein uL5 (rpl11), found in Dictyostelium discoideum (Social amoeba).